A 314-amino-acid chain; its full sequence is 4-hydroxy-3-methylbut-2-enyl diphosphate reductase (314 aa).

A [4Fe-4S] cluster-binding site is contributed by Cys12. Positions 41 and 74 each coordinate (2E)-4-hydroxy-3-methylbut-2-enyl diphosphate. Dimethylallyl diphosphate contacts are provided by His41 and His74. Residues His41 and His74 each contribute to the isopentenyl diphosphate site. Position 96 (Cys96) interacts with [4Fe-4S] cluster. His124 contributes to the (2E)-4-hydroxy-3-methylbut-2-enyl diphosphate binding site. His124 lines the dimethylallyl diphosphate pocket. His124 contributes to the isopentenyl diphosphate binding site. The active-site Proton donor is Glu126. Thr167 contacts (2E)-4-hydroxy-3-methylbut-2-enyl diphosphate. Residue Cys197 coordinates [4Fe-4S] cluster. (2E)-4-hydroxy-3-methylbut-2-enyl diphosphate contacts are provided by Ser225, Ser226, Asn227, and Ser269. Dimethylallyl diphosphate is bound by residues Ser225, Ser226, Asn227, and Ser269. Residues Ser225, Ser226, Asn227, and Ser269 each contribute to the isopentenyl diphosphate site.

Belongs to the IspH family. [4Fe-4S] cluster serves as cofactor.

The enzyme catalyses isopentenyl diphosphate + 2 oxidized [2Fe-2S]-[ferredoxin] + H2O = (2E)-4-hydroxy-3-methylbut-2-enyl diphosphate + 2 reduced [2Fe-2S]-[ferredoxin] + 2 H(+). It carries out the reaction dimethylallyl diphosphate + 2 oxidized [2Fe-2S]-[ferredoxin] + H2O = (2E)-4-hydroxy-3-methylbut-2-enyl diphosphate + 2 reduced [2Fe-2S]-[ferredoxin] + 2 H(+). The protein operates within isoprenoid biosynthesis; dimethylallyl diphosphate biosynthesis; dimethylallyl diphosphate from (2E)-4-hydroxy-3-methylbutenyl diphosphate: step 1/1. It participates in isoprenoid biosynthesis; isopentenyl diphosphate biosynthesis via DXP pathway; isopentenyl diphosphate from 1-deoxy-D-xylulose 5-phosphate: step 6/6. Functionally, catalyzes the conversion of 1-hydroxy-2-methyl-2-(E)-butenyl 4-diphosphate (HMBPP) into a mixture of isopentenyl diphosphate (IPP) and dimethylallyl diphosphate (DMAPP). Acts in the terminal step of the DOXP/MEP pathway for isoprenoid precursor biosynthesis. This Glaesserella parasuis serovar 5 (strain SH0165) (Haemophilus parasuis) protein is 4-hydroxy-3-methylbut-2-enyl diphosphate reductase.